Here is a 387-residue protein sequence, read N- to C-terminus: Major outer membrane porin (387 aa).

Positions 1–22 (MKKLLKSVLAFAVLGSASSLHA) are cleaved as a signal peptide.

This sequence belongs to the chlamydial porin (CP) (TC 1.B.2) family. In terms of assembly, part of a disulfide cross-linked outer membrane complex (COMC) composed of the major outer membrane porin (MOMP), the small cysteine-rich protein (OmcA) and the large cysteine-rich periplasmic protein (OmcB).

The protein resides in the cell outer membrane. Its function is as follows. In elementary bodies (EBs, the infectious stage, which is able to survive outside the host cell) provides the structural integrity of the outer envelope through disulfide cross-links with the small cysteine-rich protein and the large cysteine-rich periplasmic protein. It has been described in publications as the Sarkosyl-insoluble COMC (Chlamydia outer membrane complex), and serves as the functional equivalent of peptidoglycan. In terms of biological role, permits diffusion of specific solutes through the outer membrane. In Chlamydia muridarum (strain MoPn / Nigg), this protein is Major outer membrane porin (ompA).